The chain runs to 350 residues: Nicotinate-nucleotide--dimethylbenzimidazole phosphoribosyltransferase (350 aa).

The Proton acceptor role is filled by Glu-317.

The protein belongs to the CobT family.

The catalysed reaction is 5,6-dimethylbenzimidazole + nicotinate beta-D-ribonucleotide = alpha-ribazole 5'-phosphate + nicotinate + H(+). The protein operates within nucleoside biosynthesis; alpha-ribazole biosynthesis; alpha-ribazole from 5,6-dimethylbenzimidazole: step 1/2. Functionally, catalyzes the synthesis of alpha-ribazole-5'-phosphate from nicotinate mononucleotide (NAMN) and 5,6-dimethylbenzimidazole (DMB). This chain is Nicotinate-nucleotide--dimethylbenzimidazole phosphoribosyltransferase, found in Shewanella sp. (strain MR-4).